The chain runs to 89 residues: Small ribosomal subunit protein uS15 (89 aa).

It belongs to the universal ribosomal protein uS15 family. Part of the 30S ribosomal subunit. Forms a bridge to the 50S subunit in the 70S ribosome, contacting the 23S rRNA.

In terms of biological role, one of the primary rRNA binding proteins, it binds directly to 16S rRNA where it helps nucleate assembly of the platform of the 30S subunit by binding and bridging several RNA helices of the 16S rRNA. Functionally, forms an intersubunit bridge (bridge B4) with the 23S rRNA of the 50S subunit in the ribosome. The sequence is that of Small ribosomal subunit protein uS15 from Photorhabdus luminescens (Xenorhabdus luminescens).